The following is a 332-amino-acid chain: UDP-3-O-acylglucosamine N-acyltransferase (332 aa).

The active-site Proton acceptor is the histidine 231.

This sequence belongs to the transferase hexapeptide repeat family. LpxD subfamily. As to quaternary structure, homotrimer.

The catalysed reaction is a UDP-3-O-[(3R)-3-hydroxyacyl]-alpha-D-glucosamine + a (3R)-hydroxyacyl-[ACP] = a UDP-2-N,3-O-bis[(3R)-3-hydroxyacyl]-alpha-D-glucosamine + holo-[ACP] + H(+). It participates in bacterial outer membrane biogenesis; LPS lipid A biosynthesis. Catalyzes the N-acylation of UDP-3-O-acylglucosamine using 3-hydroxyacyl-ACP as the acyl donor. Is involved in the biosynthesis of lipid A, a phosphorylated glycolipid that anchors the lipopolysaccharide to the outer membrane of the cell. This Ruthia magnifica subsp. Calyptogena magnifica protein is UDP-3-O-acylglucosamine N-acyltransferase.